Reading from the N-terminus, the 890-residue chain is Translation initiation factor IF-2 (890 aa).

The interval 45-304 is disordered; sequence LIDHLNQKNS…LQQGFQKPAQ (260 aa). Polar residues predominate over residues 67–81; the sequence is STLNIPGTGGKSKSV. Positions 92–217 are enriched in basic and acidic residues; it reads VKRDPQEAER…RMAEENKWTD (126 aa). Over residues 252–266 the composition is skewed to basic residues; the sequence is GRGRNAKAARPKKGN. Residues 267-280 show a composition bias toward basic and acidic residues; sequence KHSESKADREEARA. Residues 389 to 558 enclose the tr-type G domain; sequence PRAPVVTIMG…LLQAEVLELK (170 aa). Residues 398–405 form a G1 region; that stretch reads GHVDHGKT. Position 398 to 405 (398 to 405) interacts with GTP; it reads GHVDHGKT. The tract at residues 423–427 is G2; sequence GITQH. The segment at 444 to 447 is G3; it reads DTPG. GTP is bound by residues 444–448 and 498–501; these read DTPGH and NKID. The G4 stretch occupies residues 498-501; the sequence is NKID. The segment at 534–536 is G5; that stretch reads SAK. Lysine 808 is modified (N6-acetyllysine).

The protein belongs to the TRAFAC class translation factor GTPase superfamily. Classic translation factor GTPase family. IF-2 subfamily.

Its subcellular location is the cytoplasm. Functionally, one of the essential components for the initiation of protein synthesis. Protects formylmethionyl-tRNA from spontaneous hydrolysis and promotes its binding to the 30S ribosomal subunits. Also involved in the hydrolysis of GTP during the formation of the 70S ribosomal complex. The protein is Translation initiation factor IF-2 of Escherichia fergusonii (strain ATCC 35469 / DSM 13698 / CCUG 18766 / IAM 14443 / JCM 21226 / LMG 7866 / NBRC 102419 / NCTC 12128 / CDC 0568-73).